Reading from the N-terminus, the 655-residue chain is Putative esterase (655 aa).

Residues 9 to 29 (VLSLTLIYISISIGFSVYFYV) traverse the membrane as a helical segment. Residues N71, N89, N101, N185, N386, N449, and N512 are each glycosylated (N-linked (GlcNAc...) asparagine; by host). H515 (charge relay system) is an active-site residue. N-linked (GlcNAc...) asparagine; by host glycans are attached at residues N527 and N597.

This sequence belongs to the type-B carboxylesterase/lipase family.

The protein resides in the membrane. The enzyme catalyses a carboxylic ester + H2O = an alcohol + a carboxylate + H(+). In Noctuidae (owlet moths), this protein is Putative esterase.